The primary structure comprises 1071 residues: Carbamoyl phosphate synthase large chain (1071 aa).

A carboxyphosphate synthetic domain region spans residues Met-1–Glu-403. In terms of domain architecture, ATP-grasp 1 spans Lys-133–Val-328. Residues Arg-169, Gly-175, Gly-176, Gln-208, Val-210, Glu-215, Gly-241, Val-242, His-243, Gln-285, and Glu-299 each contribute to the ATP site. Mg(2+)-binding residues include Gln-285, Glu-299, and Asn-301. Positions 285, 299, and 301 each coordinate Mn(2+). Residues Thr-404 to Ser-548 are oligomerization domain. The segment at Arg-549–Gly-930 is carbamoyl phosphate synthetic domain. Positions Gln-673–Ala-864 constitute an ATP-grasp 2 domain. 10 residues coordinate ATP: Arg-709, Phe-748, Leu-750, Glu-755, Gly-780, Ile-781, His-782, Ser-783, Gln-823, and Glu-835. 3 residues coordinate Mg(2+): Gln-823, Glu-835, and Asn-837. Residues Gln-823, Glu-835, and Asn-837 each contribute to the Mn(2+) site. An MGS-like domain is found at Glu-931 to Asn-1071. The allosteric domain stretch occupies residues Glu-931–Asn-1071.

Belongs to the CarB family. In terms of assembly, composed of two chains; the small (or glutamine) chain promotes the hydrolysis of glutamine to ammonia, which is used by the large (or ammonia) chain to synthesize carbamoyl phosphate. Tetramer of heterodimers (alpha,beta)4. Mg(2+) serves as cofactor. Requires Mn(2+) as cofactor.

The enzyme catalyses hydrogencarbonate + L-glutamine + 2 ATP + H2O = carbamoyl phosphate + L-glutamate + 2 ADP + phosphate + 2 H(+). It catalyses the reaction hydrogencarbonate + NH4(+) + 2 ATP = carbamoyl phosphate + 2 ADP + phosphate + 2 H(+). It participates in amino-acid biosynthesis; L-arginine biosynthesis; carbamoyl phosphate from bicarbonate: step 1/1. The protein operates within pyrimidine metabolism; UMP biosynthesis via de novo pathway; (S)-dihydroorotate from bicarbonate: step 1/3. Functionally, large subunit of the glutamine-dependent carbamoyl phosphate synthetase (CPSase). CPSase catalyzes the formation of carbamoyl phosphate from the ammonia moiety of glutamine, carbonate, and phosphate donated by ATP, constituting the first step of 2 biosynthetic pathways, one leading to arginine and/or urea and the other to pyrimidine nucleotides. The large subunit (synthetase) binds the substrates ammonia (free or transferred from glutamine from the small subunit), hydrogencarbonate and ATP and carries out an ATP-coupled ligase reaction, activating hydrogencarbonate by forming carboxy phosphate which reacts with ammonia to form carbamoyl phosphate. The protein is Carbamoyl phosphate synthase large chain of Neisseria gonorrhoeae.